A 248-amino-acid chain; its full sequence is Coenzyme F420:L-glutamate ligase (248 aa).

GTP is bound by residues I15–I18, E45–T46, and K50. Residue D115 coordinates a divalent metal cation. Residue N118 participates in GTP binding. D155, S156, and Q213 together coordinate a divalent metal cation. M211–I218 lines the GTP pocket.

The protein belongs to the CofE family. Homodimer. Mg(2+) is required as a cofactor. It depends on Mn(2+) as a cofactor. Requires K(+) as cofactor.

The enzyme catalyses oxidized coenzyme F420-0 + GTP + L-glutamate = oxidized coenzyme F420-1 + GDP + phosphate + H(+). It catalyses the reaction oxidized coenzyme F420-1 + GTP + L-glutamate = oxidized coenzyme F420-2 + GDP + phosphate + H(+). Its pathway is cofactor biosynthesis; coenzyme F420 biosynthesis. Its function is as follows. Catalyzes the GTP-dependent successive addition of two or more gamma-linked L-glutamates to the L-lactyl phosphodiester of 7,8-didemethyl-8-hydroxy-5-deazariboflavin (F420-0) to form coenzyme F420-0-glutamyl-glutamate (F420-2) or polyglutamated F420 derivatives. This chain is Coenzyme F420:L-glutamate ligase, found in Methanococcus maripaludis (strain DSM 14266 / JCM 13030 / NBRC 101832 / S2 / LL).